The following is a 743-amino-acid chain: MIEDSGKRGNTMAERRQLFAEMRAQDLDRIRLSTYRTACKLRFVQKKCNLHLVDIWNVIEALRENALNNLDPNTELNVSRLEAVLSTIFYQLNKRMPTTHQIHVEQSISLLLNFLLAAFDPEGHGKISVFAVKMALATLCGGKIMDKLRYIFSMISDSSGVMVYGRYDQFLREVLKLPTAVFEGPSFGYTEQSARSCFSQQKKVTLNGFLDTLMSDPPPQCLVWLPLLHRLANVENVFHPVECSYCHSESMMGFRYRCQQCHNYQLCQDCFWRGHAGGSHSNQHQMKEYTSWKSPAKKLTNALSKSLSCASSREPLHPMFPDQPEKPLNLAHIVDTWPPRPVTSMNDTLFSHSVPSSGSPFITRSSPPKDSEVEQNKLLARAAPAFLKGKGIQYSLNVADRLADEHVLIGLYVNMLRNNPSCMLESSNRLDEEHRLIARYAARLAAESSSSQPPQQRSAPDISFTIDANKQQRQLIAELENKNREILQEIQRLRLEHEQASQPTPEKAQQNPTLLAELRLLRQRKDELEQRMSALQESRRELMVQLEGLMKLLKTQGAGSPRSSPSHTISRPIPMPIRSASACSTPTHTPQDSLTGVGGDVQEAFAQSSRRNLRNDLLVAADSITNTMSSLVKELNSEVGSETESNVDSEFARTQFEDLVPSPTSEKAFLAQIHARKPGYIHSGATTSTMRGDMVTEDADPYVQPEDENYENDSVRQLENELQMEEYLKQKLQDEAYQVSLQG.

The interval 1-288 is interaction with MAGEE1; sequence MIEDSGKRGN…SHSNQHQMKE (288 aa). The ZZ-type zinc-finger motif lies at 238–294; the sequence is FHPVECSYCHSESMMGFRYRCQQCHNYQLCQDCFWRGHAGGSHSNQHQMKEYTSWKS. 8 residues coordinate Zn(2+): cysteine 243, cysteine 246, cysteine 258, cysteine 261, cysteine 267, cysteine 270, histidine 280, and histidine 284. The syntrophin-binding region stretch occupies residues 400–450; it reads DRLADEHVLIGLYVNMLRNNPSCMLESSNRLDEEHRLIARYAARLAAESSS. A coiled-coil region spans residues 461 to 556; the sequence is DISFTIDANK…EGLMKLLKTQ (96 aa). The interval 556-575 is disordered; sequence QGAGSPRSSPSHTISRPIPM. Residues 557-569 are compositionally biased toward polar residues; that stretch reads GAGSPRSSPSHTI. At serine 662 the chain carries Phosphoserine.

Belongs to the dystrophin family. Dystrobrevin subfamily. In terms of assembly, interacts with dystrophin, utrophin and the syntrophins SNTA1, SNTB1, SNTB2, SNTG1 and SNTG2. Interacts with MAGEE1. Binds dystrobrevin binding protein 1. Interacts with CTNNAL1. The interaction is required for correct localization of both CTNNAL1 and DTNA. As to quaternary structure, does not interact with dystrophin. Post-translationally, phosphorylation of DTN-1 on tyrosine kinase substrate domain present in the C-terminus. Highly expressed in brain, skeletal and cardiac muscles, and expressed at lower levels in lung, liver and pancreas. Isoform 2 is not expressed in cardiac muscle. Isoform 7 and isoform 8 are only expressed in muscle.

The protein localises to the cytoplasm. It localises to the synapse. Its subcellular location is the cell membrane. Functionally, may be involved in the formation and stability of synapses as well as being involved in the clustering of nicotinic acetylcholine receptors. The polypeptide is Dystrobrevin alpha (Homo sapiens (Human)).